A 356-amino-acid polypeptide reads, in one-letter code: UDP-N-acetylglucosamine--N-acetylmuramyl-(pentapeptide) pyrophosphoryl-undecaprenol N-acetylglucosamine transferase (356 aa).

UDP-N-acetyl-alpha-D-glucosamine is bound by residues Thr-15 to Gly-17, Asn-127, Arg-163, Ser-191, Ile-244, Ala-263 to Glu-268, and Gln-288.

Belongs to the glycosyltransferase 28 family. MurG subfamily.

Its subcellular location is the cell inner membrane. The catalysed reaction is di-trans,octa-cis-undecaprenyl diphospho-N-acetyl-alpha-D-muramoyl-L-alanyl-D-glutamyl-meso-2,6-diaminopimeloyl-D-alanyl-D-alanine + UDP-N-acetyl-alpha-D-glucosamine = di-trans,octa-cis-undecaprenyl diphospho-[N-acetyl-alpha-D-glucosaminyl-(1-&gt;4)]-N-acetyl-alpha-D-muramoyl-L-alanyl-D-glutamyl-meso-2,6-diaminopimeloyl-D-alanyl-D-alanine + UDP + H(+). Its pathway is cell wall biogenesis; peptidoglycan biosynthesis. Functionally, cell wall formation. Catalyzes the transfer of a GlcNAc subunit on undecaprenyl-pyrophosphoryl-MurNAc-pentapeptide (lipid intermediate I) to form undecaprenyl-pyrophosphoryl-MurNAc-(pentapeptide)GlcNAc (lipid intermediate II). The polypeptide is UDP-N-acetylglucosamine--N-acetylmuramyl-(pentapeptide) pyrophosphoryl-undecaprenol N-acetylglucosamine transferase (Yersinia pestis (strain Pestoides F)).